We begin with the raw amino-acid sequence, 229 residues long: Enolase-phosphatase E1 (229 aa).

Residues D7 and E9 each contribute to the Mg(2+) site. Residues 122–123 and K161 each bind substrate; that span reads SS. D186 is a Mg(2+) binding site.

It belongs to the HAD-like hydrolase superfamily. MasA/MtnC family. As to quaternary structure, monomer. The cofactor is Mg(2+).

It is found in the cytoplasm. The protein localises to the nucleus. It catalyses the reaction 5-methylsulfanyl-2,3-dioxopentyl phosphate + H2O = 1,2-dihydroxy-5-(methylsulfanyl)pent-1-en-3-one + phosphate. It participates in amino-acid biosynthesis; L-methionine biosynthesis via salvage pathway; L-methionine from S-methyl-5-thio-alpha-D-ribose 1-phosphate: step 3/6. Its pathway is amino-acid biosynthesis; L-methionine biosynthesis via salvage pathway; L-methionine from S-methyl-5-thio-alpha-D-ribose 1-phosphate: step 4/6. In terms of biological role, bifunctional enzyme that catalyzes the enolization of 2,3-diketo-5-methylthiopentyl-1-phosphate (DK-MTP-1-P) into the intermediate 2-hydroxy-3-keto-5-methylthiopentenyl-1-phosphate (HK-MTPenyl-1-P), which is then dephosphorylated to form the acireductone 1,2-dihydroxy-3-keto-5-methylthiopentene (DHK-MTPene). The chain is Enolase-phosphatase E1 from Clavispora lusitaniae (strain ATCC 42720) (Yeast).